The following is a 154-amino-acid chain: RxLR effector protein PITG_12737 (154 aa).

The N-terminal stretch at 1–16 is a signal peptide; it reads MRVYFILILAVATVSG. A RxLR-dEER motif is present at residues 42 to 58; sequence RLLRAELTTDETYPEER.

This sequence belongs to the RxLR effector family.

The protein resides in the secreted. It is found in the host nucleus. The protein localises to the host cytoplasm. Effector that enhances P.infestans colonization of Nicotiana benthamiana leaves. This is RxLR effector protein PITG_12737 from Phytophthora infestans (strain T30-4) (Potato late blight agent).